Consider the following 867-residue polypeptide: GRB2-associated and regulator of MAPK protein 1 (867 aa).

Residues 12–322 (NNITWSTTTL…GLLQGESWFE (311 aa)) form a CABIT region. Residue Tyr-464 is modified to Phosphotyrosine. Disordered stretches follow at residues 511–530 (SADV…AVKE), 536–594 (DAPP…QIES), and 735–758 (PPRT…TADA). Composition is skewed to polar residues over residues 544 to 554 (SSKQAGSSSAT) and 569 to 581 (SPSP…SSGL). Residues 740 to 749 (KCTDAKKDAE) show a composition bias toward basic and acidic residues. The region spanning 802–867 (ISIEEISKSL…QFINGWRPKM (66 aa)) is the SAM domain.

The protein belongs to the GAREM family.

Functionally, adapter protein that may provide a link between cell surface epidermal growth factor receptor and the MAPK/ERK signaling pathway. May promote cell proliferation. The chain is GRB2-associated and regulator of MAPK protein 1 (garem1) from Danio rerio (Zebrafish).